Here is a 306-residue protein sequence, read N- to C-terminus: MTNEFLHFEKISRQTWQSLHRKTTPPLTEEELESIKSFNDQISLQDVTDIYLPLAHLIQIYKRTKEDLAFSKGIFLQRESKSQPFIIGVSGSVAVGKSTTSRLLQILLSRTFTDATVELVTTDGFLYPNQTLIEQGILNRKGFPESYDMEALLNFLDRIKNGQDVDIPVYSHEVYDIVPEEKQSVKAADFVIVEGINVFQNPQNDRLYITDFFDFSIYVDAGVDDIESWYLDRFLKMLSLAQNDPDSYYYRFTQMPIGEVEAFAHQVWTSINLTNLQNYIEPTRNRAEVILHKSKNHEIDEIYLKK.

91 to 98 (GSVAVGKS) is an ATP binding site.

The protein belongs to the prokaryotic pantothenate kinase family.

The protein resides in the cytoplasm. It catalyses the reaction (R)-pantothenate + ATP = (R)-4'-phosphopantothenate + ADP + H(+). Its pathway is cofactor biosynthesis; coenzyme A biosynthesis; CoA from (R)-pantothenate: step 1/5. The protein is Pantothenate kinase of Streptococcus pneumoniae serotype 2 (strain D39 / NCTC 7466).